Here is a 98-residue protein sequence, read N- to C-terminus: HssA/B-like protein 39 (98 aa).

Residues 1-21 are disordered; it reads MTLFSSISSMSTSMSGSKSSI.

Belongs to the hssA/B family.

The polypeptide is HssA/B-like protein 39 (hssl39) (Dictyostelium discoideum (Social amoeba)).